A 307-amino-acid polypeptide reads, in one-letter code: Aspartate carbamoyltransferase catalytic subunit (307 aa).

Carbamoyl phosphate contacts are provided by Arg-51 and Thr-52. Lys-80 is a binding site for L-aspartate. Arg-101, His-129, and Gln-132 together coordinate carbamoyl phosphate. L-aspartate-binding residues include Arg-162 and Arg-225. Leu-264 and Pro-265 together coordinate carbamoyl phosphate.

Belongs to the aspartate/ornithine carbamoyltransferase superfamily. ATCase family. Heterododecamer (2C3:3R2) of six catalytic PyrB chains organized as two trimers (C3), and six regulatory PyrI chains organized as three dimers (R2).

The enzyme catalyses carbamoyl phosphate + L-aspartate = N-carbamoyl-L-aspartate + phosphate + H(+). Its pathway is pyrimidine metabolism; UMP biosynthesis via de novo pathway; (S)-dihydroorotate from bicarbonate: step 2/3. Catalyzes the condensation of carbamoyl phosphate and aspartate to form carbamoyl aspartate and inorganic phosphate, the committed step in the de novo pyrimidine nucleotide biosynthesis pathway. The sequence is that of Aspartate carbamoyltransferase catalytic subunit from Lachnoclostridium phytofermentans (strain ATCC 700394 / DSM 18823 / ISDg) (Clostridium phytofermentans).